The following is an 87-amino-acid chain: Large ribosomal subunit protein bL27 (87 aa).

A disordered region spans residues 1–23 (MAHKKGTGSTRNGRDSNAQRLGV). A compositionally biased stretch (polar residues) spans 7-19 (TGSTRNGRDSNAQ).

This sequence belongs to the bacterial ribosomal protein bL27 family.

The chain is Large ribosomal subunit protein bL27 (rpmA) from Synechocystis sp. (strain ATCC 27184 / PCC 6803 / Kazusa).